The primary structure comprises 89 residues: Phosphoribulokinase, chloroplastic (89 aa).

The interval 1-22 (LTSVFGGAAEPPRGGNPDSNTL) is disordered.

Belongs to the phosphoribulokinase family.

It is found in the plastid. Its subcellular location is the chloroplast. The catalysed reaction is D-ribulose 5-phosphate + ATP = D-ribulose 1,5-bisphosphate + ADP + H(+). It participates in carbohydrate biosynthesis; Calvin cycle. With respect to regulation, light regulated via thioredoxin by reversible oxidation/reduction of sulfhydryl/disulfide groups. The protein is Phosphoribulokinase, chloroplastic of Vitis sp. (Grape).